Reading from the N-terminus, the 333-residue chain is Phosphate acyltransferase (333 aa).

Belongs to the PlsX family. Homodimer. Probably interacts with PlsY.

It localises to the cytoplasm. It carries out the reaction a fatty acyl-[ACP] + phosphate = an acyl phosphate + holo-[ACP]. The protein operates within lipid metabolism; phospholipid metabolism. Catalyzes the reversible formation of acyl-phosphate (acyl-PO(4)) from acyl-[acyl-carrier-protein] (acyl-ACP). This enzyme utilizes acyl-ACP as fatty acyl donor, but not acyl-CoA. The sequence is that of Phosphate acyltransferase from Lactobacillus gasseri (strain ATCC 33323 / DSM 20243 / BCRC 14619 / CIP 102991 / JCM 1131 / KCTC 3163 / NCIMB 11718 / NCTC 13722 / AM63).